Consider the following 526-residue polypeptide: GMP synthase [glutamine-hydrolyzing] (526 aa).

A Glutamine amidotransferase type-1 domain is found at 10–208; sequence RILILDFGSQ…VVDLCGCEKL (199 aa). The active-site Nucleophile is the Cys-87. Residues His-182 and Glu-184 contribute to the active site. The region spanning 209 to 401 is the GMPS ATP-PPase domain; the sequence is WTTENIIDDS…LGLPSDMVYR (193 aa). 236 to 242 serves as a coordination point for ATP; it reads SGGVDSS.

Homodimer.

It catalyses the reaction XMP + L-glutamine + ATP + H2O = GMP + L-glutamate + AMP + diphosphate + 2 H(+). Its pathway is purine metabolism; GMP biosynthesis; GMP from XMP (L-Gln route): step 1/1. Its function is as follows. Catalyzes the synthesis of GMP from XMP. The polypeptide is GMP synthase [glutamine-hydrolyzing] (Hydrogenovibrio crunogenus (strain DSM 25203 / XCL-2) (Thiomicrospira crunogena)).